The sequence spans 315 residues: Eukaryotic translation initiation factor 2 subunit 1 (315 aa).

The region spanning 17-88 is the S1 motif domain; that stretch reads EDVVMVNVRS…EKGYIDLSKR (72 aa). Ser-49 and Ser-52 each carry phosphoserine. Residues 292–315 are disordered; the sequence is RLERENAEVDGDDDAEEMEAKTED. Acidic residues predominate over residues 299–308; that stretch reads EVDGDDDAEE.

It belongs to the eIF-2-alpha family. In terms of assembly, eukaryotic translation initiation factor 2 eIF2 is a heterotrimeric complex composed of an alpha (EIF2S1), a beta (EIF2S2) and a gamma (EIF2S3) chain. Post-translationally, phosphorylation at Ser-49 and Ser-52 stabilizes the eIF-2/GDP/eIF2B complex and prevents GDP/GTP exchange reaction, thus impairing the recycling of eIF-2 between successive rounds of initiation and leading to global inhibition of translation, while concomitantly initiating the preferential translation of integrated stress response (ISR)-specific mRNAs.

It localises to the cytoplasm. Its subcellular location is the stress granule. It is found in the cytosol. With respect to regulation, activity is regulated by phosphorylation at Ser-49 and Ser-52, which stabilizes the eIF2/GDP/eIF2B complex and prevents the eIF2B-mediated exchange of GDP for GTP, thereby preventing the formation of the 43S pre-initiation complex (43S PIC). This results in the global attenuation of 5' cap-dependent protein synthesis and concomitant translation of ISR-specific mRNAs that contain a short upstream open reading frame (uORF) in their 5' UTR. Functionally, member of the eIF2 complex that functions in the early steps of protein synthesis by forming a ternary complex with GTP and initiator tRNA. This complex binds to a 40S ribosomal subunit, followed by mRNA binding to form a 43S pre-initiation complex. Junction of the 60S ribosomal subunit to form the 80S initiation complex is preceded by hydrolysis of the GTP bound to eIF2 and release of an eIF2-GDP binary complex. In order for eIF2 to recycle and catalyze another round of initiation, the GDP bound to eIF2 must exchange with GTP by way of a reaction catalyzed by eIF2B. EIF2S1/eIF2-alpha is a key component of the integrated stress response (ISR), required for adaptation to various stress: phosphorylation by metabolic-stress sensing protein kinases (EIF2AK1/HRI, EIF2AK2/PKR, EIF2AK3/PERK and EIF2AK4/GCN2) in response to stress converts EIF2S1/eIF2-alpha in a global protein synthesis inhibitor, leading to a attenuation of cap-dependent translation, while concomitantly initiating the preferential translation of ISR-specific mRNAs, such as the transcriptional activators ATF4 and QRICH1. The polypeptide is Eukaryotic translation initiation factor 2 subunit 1 (EIF2S1) (Gallus gallus (Chicken)).